Consider the following 354-residue polypeptide: Protein-arginine kinase (354 aa).

A Phosphagen kinase C-terminal domain is found at 24–254; that stretch reads IVLSSRIRLA…QQIIQQEKMA (231 aa). Residues 27–31, His-92, Arg-125, 176–180, and 207–212 each bind ATP; these read SSRIR, RASVM, and RGIYGE. Residues 337–342 carry the RDXXRA motif of the pArg binding pocket involved in allosteric regulation motif; it reads RDYRRA.

Belongs to the ATP:guanido phosphotransferase family.

The enzyme catalyses L-arginyl-[protein] + ATP = N(omega)-phospho-L-arginyl-[protein] + ADP + H(+). Its activity is regulated as follows. Appears to be allosterically activated by the binding of pArg-containing polypeptides to the pArg-binding pocket localized in the C-terminal domain of McsB. In terms of biological role, catalyzes the specific phosphorylation of arginine residues in a large number of proteins. Is part of the bacterial stress response system. Protein arginine phosphorylation has a physiologically important role and is involved in the regulation of many critical cellular processes, such as protein homeostasis, motility, competence, and stringent and stress responses, by regulating gene expression and protein activity. This Bacillus anthracis (strain A0248) protein is Protein-arginine kinase.